Consider the following 448-residue polypeptide: Antizyme inhibitor 1 (448 aa).

It belongs to the Orn/Lys/Arg decarboxylase class-II family. ODC antizyme inhibitor subfamily. Monomer. Interacts with OAZ1 and OAZ3; this interaction disrupts the interaction between the antizyme and ODC1. In terms of processing, ubiquitinated, leading to its proteasomal degradation; a process that is reduced in presence of antizyme OAZ1. As to expression, expressed in various tissues including liver, heart and kidney.

The protein resides in the nucleus. Its function is as follows. Antizyme inhibitor (AZI) protein that positively regulates ornithine decarboxylase (ODC) activity and polyamine uptake. AZI is an enzymatically inactive ODC homolog that counteracts the negative effect of ODC antizymes (AZs) OAZ1, OAZ2 and OAZ3 on ODC activity by competing with ODC for antizyme-binding. Inhibits antizyme-dependent ODC degradation and releases ODC monomers from their inactive complex with antizymes, leading to formation of the catalytically active ODC homodimer and restoring polyamine production. The protein is Antizyme inhibitor 1 (Azin1) of Rattus norvegicus (Rat).